A 209-amino-acid polypeptide reads, in one-letter code: Thymidylate kinase (209 aa).

G10–S17 is an ATP binding site.

It belongs to the thymidylate kinase family.

It carries out the reaction dTMP + ATP = dTDP + ADP. Its function is as follows. Phosphorylation of dTMP to form dTDP in both de novo and salvage pathways of dTTP synthesis. This chain is Thymidylate kinase, found in Parasynechococcus marenigrum (strain WH8102).